A 1576-amino-acid chain; its full sequence is DNA-directed RNA polymerase subunit beta' (1576 aa).

Positions 64, 66, 79, and 82 each coordinate Zn(2+). Mg(2+)-binding residues include Asp-590, Asp-592, and Asp-594. Residues Cys-928, Cys-1002, Cys-1009, and Cys-1012 each coordinate Zn(2+).

Belongs to the RNA polymerase beta' chain family. The RNAP catalytic core consists of 2 alpha, 1 beta, 1 beta' and 1 omega subunit. When a sigma factor is associated with the core the holoenzyme is formed, which can initiate transcription. Mg(2+) serves as cofactor. Zn(2+) is required as a cofactor.

It catalyses the reaction RNA(n) + a ribonucleoside 5'-triphosphate = RNA(n+1) + diphosphate. DNA-dependent RNA polymerase catalyzes the transcription of DNA into RNA using the four ribonucleoside triphosphates as substrates. In Aquifex pyrophilus, this protein is DNA-directed RNA polymerase subunit beta'.